We begin with the raw amino-acid sequence, 286 residues long: ATP phosphoribosyltransferase (286 aa).

It belongs to the ATP phosphoribosyltransferase family. Long subfamily. Mg(2+) serves as cofactor.

The protein resides in the cytoplasm. The catalysed reaction is 1-(5-phospho-beta-D-ribosyl)-ATP + diphosphate = 5-phospho-alpha-D-ribose 1-diphosphate + ATP. It functions in the pathway amino-acid biosynthesis; L-histidine biosynthesis; L-histidine from 5-phospho-alpha-D-ribose 1-diphosphate: step 1/9. Feedback inhibited by histidine. Functionally, catalyzes the condensation of ATP and 5-phosphoribose 1-diphosphate to form N'-(5'-phosphoribosyl)-ATP (PR-ATP). Has a crucial role in the pathway because the rate of histidine biosynthesis seems to be controlled primarily by regulation of HisG enzymatic activity. In Cytophaga hutchinsonii (strain ATCC 33406 / DSM 1761 / CIP 103989 / NBRC 15051 / NCIMB 9469 / D465), this protein is ATP phosphoribosyltransferase.